Reading from the N-terminus, the 212-residue chain is Cyclin-dependent kinase 2-interacting protein (212 aa).

Methionine 1 bears the N-acetylmethionine mark. 2 positions are modified to phosphoserine: serine 69 and serine 73. Positions serine 73–valine 107 form a coiled coil. Serine 202 is a Na(+) binding site.

This sequence belongs to the CINP family. As to quaternary structure, homodimer. Part of the 55LCC heterohexameric ATPase complex composed at least of AIRIM, AFG2A, AFG2B and CINP. Interacts with AIRIM. Interacts with CDK2 and CDC7. Interacts with the components of the replication complex, MCM2, MCM3, MCM4, MCM5, MCM6, MCM7 and with ORC2-containing complexes. Interacts with ATRIP. Interacts with CEP152. Associates with pre-60S ribosomal particles. Post-translationally, phosphorylated by CDC7 but not by CDK2.

The protein localises to the nucleus. Component of the DNA replication complex, which interacts with two kinases, CDK2 and CDC7, thereby providing a functional and physical link between CDK2 and CDC7 during firing of the origins of replication. Regulates ATR-mediated checkpoint signaling in response to DNA damage. Part of the 55LCC heterohexameric ATPase complex which is chromatin-associated and promotes replisome proteostasis to maintain replication fork progression and genome stability. Required for replication fork progression, sister chromatid cohesion, and chromosome stability. The ATPase activity is specifically enhanced by replication fork DNA and is coupled to cysteine protease-dependent cleavage of replisome substrates in response to replication fork damage. Uses ATPase activity to process replisome substrates in S-phase, facilitating their proteolytic turnover from chromatin to ensure DNA replication and mitotic fidelity. As part of 55LCC complex, also involved in the cytoplasmic maturation steps of pre-60S ribosomal particles by promoting the release of shuttling protein RSL24D1/RLP24 from the pre-ribosomal particles. The chain is Cyclin-dependent kinase 2-interacting protein from Homo sapiens (Human).